Reading from the N-terminus, the 498-residue chain is Cytochrome P450 6B1 (498 aa).

Heme is bound at residue C443.

Belongs to the cytochrome P450 family. Heme is required as a cofactor. As to expression, midgut microsome.

Its subcellular location is the endoplasmic reticulum membrane. The protein resides in the microsome membrane. It carries out the reaction an organic molecule + reduced [NADPH--hemoprotein reductase] + O2 = an alcohol + oxidized [NADPH--hemoprotein reductase] + H2O + H(+). Functionally, enables the insect to feed on furanocoumarin-producing plants and evolved as an adaptation for detoxification of xanthotoxin and other furanocoumarins. The polypeptide is Cytochrome P450 6B1 (CYP6B1) (Papilio polyxenes (Black swallowtail butterfly)).